The primary structure comprises 311 residues: 4-hydroxyproline 2-epimerase (311 aa).

The active-site Proton acceptor is the Cys-89. Substrate contacts are provided by residues 90–91, His-209, and Asp-233; that span reads GH. Residue Cys-237 is the Proton donor of the active site. 238–239 contributes to the substrate binding site; that stretch reads GT.

It belongs to the proline racemase family.

It catalyses the reaction trans-4-hydroxy-L-proline = cis-4-hydroxy-D-proline. Catalyzes the epimerization of trans-4-hydroxy-L-proline (t4LHyp) to cis-4-hydroxy-D-proline (c4DHyp). Is likely involved in a degradation pathway that converts t4LHyp to alpha-ketoglutarate. Displays no proline racemase activity. This chain is 4-hydroxyproline 2-epimerase, found in Burkholderia ambifaria (strain ATCC BAA-244 / DSM 16087 / CCUG 44356 / LMG 19182 / AMMD) (Burkholderia cepacia (strain AMMD)).